The following is a 65-amino-acid chain: Protein translocase subunit SecE (65 aa).

Residues Leu44–Ile64 form a helical membrane-spanning segment.

Belongs to the SecE/SEC61-gamma family. Component of the Sec protein translocase complex. Heterotrimer consisting of SecY (alpha), SecG (beta) and SecE (gamma) subunits. The heterotrimers can form oligomers, although 1 heterotrimer is thought to be able to translocate proteins. Interacts with the ribosome. May interact with SecDF, and other proteins may be involved.

The protein resides in the cell membrane. In terms of biological role, essential subunit of the Sec protein translocation channel SecYEG. Clamps together the 2 halves of SecY. May contact the channel plug during translocation. In Sulfolobus acidocaldarius (strain ATCC 33909 / DSM 639 / JCM 8929 / NBRC 15157 / NCIMB 11770), this protein is Protein translocase subunit SecE.